We begin with the raw amino-acid sequence, 1783 residues long: uncharacterized protein (1783 aa).

Residues 16 to 36 (FFLLFGIIFVLFSIIFLETSI) traverse the membrane as a helical segment. Positions 105–119 (GSDSGQSNGSGDNQN) are enriched in low complexity. The interval 105 to 125 (GSDSGQSNGSGDNQNKTIPRK) is disordered. The next 8 membrane-spanning stretches (helical) occupy residues 917-937 (VSTV…ILLI), 967-987 (VFAG…AFLL), 1010-1030 (WLSF…ISWI), 1084-1104 (LFTY…AGTI), 1660-1680 (FLLG…GISM), 1709-1729 (FIPA…GVLI), 1730-1750 (GIQA…FEFL), and 1752-1772 (YMVG…YFWI).

The protein belongs to the ABC-4 integral membrane protein family.

It is found in the cell membrane. This is an uncharacterized protein from Mycoplasma genitalium (strain ATCC 33530 / DSM 19775 / NCTC 10195 / G37) (Mycoplasmoides genitalium).